Consider the following 527-residue polypeptide: Pentatricopeptide repeat-containing protein At4g25270, chloroplastic (527 aa).

Residues 1 to 47 (MVSIVVHKPSFSYPSVSSSSMKKKPRHHQQLKQHRQNQYNNNGFTSL) constitute a chloroplast transit peptide. A disordered region spans residues 12 to 44 (SYPSVSSSSMKKKPRHHQQLKQHRQNQYNNNGF). Positions 21–35 (MKKKPRHHQQLKQHR) are enriched in basic residues. 10 PPR repeats span residues 126 to 156 (NLGI…MSKR), 159 to 193 (SPFA…GVKP), 194 to 228 (DRFT…GFGY), 229 to 259 (DVYV…IPHK), 260 to 294 (DYVS…GIEP), 295 to 326 (DKVA…GMEW), 327 to 361 (ELSV…DTVS), 367 to 389 (SAHS…NAKP), 390 to 425 (DGIT…GIDP), and 426 to 457 (KMEH…MGLE). Residues 462 to 527 (VWGALLYACY…QMMVDRGLET (66 aa)) are type E motif; degenerate.

The protein belongs to the PPR family. PCMP-E subfamily.

Its subcellular location is the plastid. It is found in the chloroplast. This chain is Pentatricopeptide repeat-containing protein At4g25270, chloroplastic (PCMP-E53), found in Arabidopsis thaliana (Mouse-ear cress).